The primary structure comprises 175 residues: Apoptosis regulatory protein Siva (175 aa).

Tyrosine 34 carries the post-translational modification Phosphotyrosine; by ABL2. An interaction with BCL2L1 isoform Bcl-x(L) and inhibition of BCL2L1 anti-apoptotic activity region spans residues 36-55; that stretch reads QEVFEKTKRLLFLGAQAYLD. At serine 70 the chain carries Phosphoserine. The tract at residues 105-123 is interaction with coxsackievirus B3 VP2; that stretch reads DPSGVASIACSSCVRAVDG.

In terms of assembly, binds through its N-terminal region to the C-terminus of CD27 and to PXMP2/PMP22. Binds to the C-terminus of TNFRSF18/GITR. Isoform 1 binds to BCL2L1/BCLX isoform Bcl-x(L) but not to BAX. As to quaternary structure, (Microbial infection) Interacts with coxsackievirus B3 capsid protein VP2; this interaction inhibits the binding of SIVA1 to CD27. Zn(2+) serves as cofactor. Post-translationally, phosphorylated by ABL2/ARG in response to oxidative stress. As to expression, ubiquitous. Mostly expressed in thymus, testis, ovary, prostate, small intestine and spleen and less in colon.

The protein resides in the cytoplasm. Its subcellular location is the nucleus. Induces CD27-mediated apoptosis. Inhibits BCL2L1 isoform Bcl-x(L) anti-apoptotic activity. Inhibits activation of NF-kappa-B and promotes T-cell receptor-mediated apoptosis. This Homo sapiens (Human) protein is Apoptosis regulatory protein Siva (SIVA1).